Reading from the N-terminus, the 104-residue chain is Circadian clock oscillator protein KaiB (104 aa).

It belongs to the KaiB family. The KaiABC complex composition changes during the circadian cycle to control KaiC phosphorylation. Complexes KaiC(6), KaiA(2-4):KaiC(6), KaiB(6):KaiC(6) and KaiC(6):KaiB(6):KaiA(12) are among the most important forms, many form cooperatively. Undergoes a major conformational rearrangment; in the free state forms homotetramers as a dimer of dimers. When bound to the CI domain of KaiC switches to a monomeric thioredoxin-fold (KaiB(fs)). KaiB(fs) binds CikA, leading it to dephosphorylate phospho-RpaA.

Functionally, key component of the KaiABC oscillator complex, which constitutes the main circadian regulator in cyanobacteria. Complex composition changes during the circadian cycle to control KaiC phosphorylation. KaiA stimulates KaiC autophosphorylation, while KaiB sequesters KaiA, leading to KaiC autodephosphorylation. Phospho-Ser-431 KaiC accumulation triggers binding of KaiB to form the KaiB(6):KaiC(6) complex, leading to changes in output regulators CikA and SasA. KaiB switches to a thioredoxin-like fold (KaiB(fs)) when bound to KaiC. KaiB(6):KaiC(6) formation exposes a site for KaiA binding that sequesters KaiA from KaiC, making the KaiC(6):KaiB(6):KaiA(12) complex that results in KaiC autodephosphorylation. In terms of biological role, a metamorphic protein which reversibly switches between an inactive tetrameric fold and a rare, thioredoxin-like monomeric fold (KaiB(fs)). KaiB(fs) binds phospho-KaiC, KaiA and CikA. KaiA and CikA compete for binding to KaiB(fs), and KaiB(fs) and SasA compete for binding to KaiC, thus the clock oscillator and output signal pathway are tightly coupled. In Parasynechococcus marenigrum (strain WH8102), this protein is Circadian clock oscillator protein KaiB.